Reading from the N-terminus, the 885-residue chain is Dipeptidyl peptidase 9 (885 aa).

Residues serine 752, aspartate 830, and histidine 862 each act as charge relay system in the active site. Serine 752 lines the Val-boroPro pocket.

Belongs to the peptidase S9B family. DPPIV subfamily. In terms of assembly, homodimer. Forms a ternary complex with NLRP1, composed of a DPP9 homodimer, one full-length NLRP1 protein, and one cleaved C-terminus of NLRP1 (NACHT, LRR and PYD domains-containing protein 1, C-terminus).

Its subcellular location is the nucleus. The enzyme catalyses Release of an N-terminal dipeptide, Xaa-Yaa-|-Zaa-, from a polypeptide, preferentially when Yaa is Pro, provided Zaa is neither Pro nor hydroxyproline.. Functionally, dipeptidyl peptidase that cleaves off N-terminal dipeptides from proteins having a Pro or Ala residue at position 2. Acts as a key inhibitor of the NLRP1 inflammasome. This Danio rerio (Zebrafish) protein is Dipeptidyl peptidase 9.